The sequence spans 427 residues: Glucose-6-phosphate isomerase (427 aa).

Glu277 serves as the catalytic Proton donor. Catalysis depends on residues His298 and Lys414.

It belongs to the GPI family.

It is found in the cytoplasm. It carries out the reaction alpha-D-glucose 6-phosphate = beta-D-fructose 6-phosphate. Its pathway is carbohydrate biosynthesis; gluconeogenesis. It functions in the pathway carbohydrate degradation; glycolysis; D-glyceraldehyde 3-phosphate and glycerone phosphate from D-glucose: step 2/4. In terms of biological role, catalyzes the reversible isomerization of glucose-6-phosphate to fructose-6-phosphate. In Mycoplasma mycoides subsp. mycoides SC (strain CCUG 32753 / NCTC 10114 / PG1), this protein is Glucose-6-phosphate isomerase.